Here is a 167-residue protein sequence, read N- to C-terminus: Periplasmic nitrate reductase, electron transfer subunit (167 aa).

The first 34 residues, 1–34 (MRRAHRAGERVMMKRFGIALLAVAIAAGASSLTA), serve as a signal peptide directing secretion. Residues 40–65 (GLHGPAPLNDEGPAPPMLPNRNTSER) are disordered. Histidine 79, cysteine 93, cysteine 96, histidine 97, histidine 114, cysteine 133, cysteine 136, and histidine 137 together coordinate heme c.

It belongs to the NapB family. As to quaternary structure, component of the periplasmic nitrate reductase NapAB complex composed of NapA and NapB. In terms of processing, binds 2 heme C groups per subunit.

The protein localises to the periplasm. Its function is as follows. Electron transfer subunit of the periplasmic nitrate reductase complex NapAB. Receives electrons from the membrane-anchored tetraheme c-type NapC protein and transfers these to NapA subunit, thus allowing electron flow between membrane and periplasm. Essential for periplasmic nitrate reduction with nitrate as the terminal electron acceptor. This chain is Periplasmic nitrate reductase, electron transfer subunit, found in Bradyrhizobium japonicum.